The primary structure comprises 667 residues: MSSLSTKTDLLGDPDFIRLQSVEVDGSEVIPGETRPRRNTKFPKLTNSPDGKTFTLYDVYRINKDSDSNFLGIRELLADGKRGDYKWISYKQACIRANNIGSALVQLGLNKGDRIGIFSINRPEWVLSDMAAMNHSLVPVALYATLGANAIEYVVNHSEISVLLCEGKNVEKILSMPGTTIKTIVSYDPLPQATLDKFKDNENVKLYLLSDFEKLGEQNPAQHEVPSPEDLCTLLYTSGSTGNPKGVMLTHTNMVSEVAGANFSPAGVIPEDVHMSYLPLAHSFERAVVSLMCYVGGQIGFFSGLIPELFNDIQVLRPTFLCGAPRVWQRLHDKLWFTVNNDSWLKKFLFNWGLNSKQSALRLGSTTPIWDKLVFSKTKDRLGGRVKFILSGSAPLDPKLAEFLRACFCCPVVSGYGLSENVGGASVAYPEDNNVGHVGPPLSACEMKLIDVPEMNYFSTDKPCPRGEVCIRGFNVFKGYFKDPEKTKEDLKEDGWFHTGDIGRWNENGTLSIIDRKKNIFKLSQGEYVAAEYLESVFVRSPFASQVFVYGDSLNSFLVGVVVPDFEVVQKLFASKYPELDVSNHATLAKSKELYKEILSSFDACAAEAKLHGFEKLKHIYVEHEPFTEENNLLTPSFKPKRPQLKERYQTIIDTLYAEYKRDHPDV.

Belongs to the ATP-dependent AMP-binding enzyme family.

Its subcellular location is the endosome membrane. The catalysed reaction is a long-chain fatty acid + ATP + CoA = a long-chain fatty acyl-CoA + AMP + diphosphate. Functionally, long chain fatty acid acyl-CoA synthetases catalyze the formation of a thiester bond between a free fatty acid and coenzyme A during fatty acid metabolic process. May mediate fatty acid retrieval from the lumen of endosomes into the cytoplasm. The protein is Fatty acyl-CoA synthetase A (fcsA) of Dictyostelium discoideum (Social amoeba).